Reading from the N-terminus, the 377-residue chain is Succinyl-diaminopimelate desuccinylase (377 aa).

Residue His-66 participates in Zn(2+) binding. Asp-68 is a catalytic residue. Position 99 (Asp-99) interacts with Zn(2+). Glu-133 functions as the Proton acceptor in the catalytic mechanism. Residues Glu-134, Glu-162, and His-348 each contribute to the Zn(2+) site.

It belongs to the peptidase M20A family. DapE subfamily. Homodimer. The cofactor is Zn(2+). It depends on Co(2+) as a cofactor.

The enzyme catalyses N-succinyl-(2S,6S)-2,6-diaminopimelate + H2O = (2S,6S)-2,6-diaminopimelate + succinate. It participates in amino-acid biosynthesis; L-lysine biosynthesis via DAP pathway; LL-2,6-diaminopimelate from (S)-tetrahydrodipicolinate (succinylase route): step 3/3. Functionally, catalyzes the hydrolysis of N-succinyl-L,L-diaminopimelic acid (SDAP), forming succinate and LL-2,6-diaminopimelate (DAP), an intermediate involved in the bacterial biosynthesis of lysine and meso-diaminopimelic acid, an essential component of bacterial cell walls. The protein is Succinyl-diaminopimelate desuccinylase of Histophilus somni (strain 129Pt) (Haemophilus somnus).